A 116-amino-acid polypeptide reads, in one-letter code: Large ribosomal subunit protein bL17 (116 aa).

The protein belongs to the bacterial ribosomal protein bL17 family. In terms of assembly, part of the 50S ribosomal subunit. Contacts protein L32.

The chain is Large ribosomal subunit protein bL17 from Chloroflexus aggregans (strain MD-66 / DSM 9485).